Reading from the N-terminus, the 389-residue chain is Phospho-N-acetylmuramoyl-pentapeptide-transferase (389 aa).

Transmembrane regions (helical) follow at residues 21 to 41 (YITM…LVAG), 71 to 91 (TPTM…LLWA), 97 to 117 (FVWV…MDDY), 134 to 154 (FFWQ…AVSA), 167 to 187 (WVSS…VPFF), 190 to 210 (VSYP…IVGT), 222 to 242 (GLAI…AYVV), 259 to 279 (AAEL…FLWF), 286 to 306 (VFMG…IAVI), 311 to 331 (IVLF…MMQV), and 366 to 386 (QVVV…LSTL).

It belongs to the glycosyltransferase 4 family. MraY subfamily. It depends on Mg(2+) as a cofactor.

The protein resides in the cell inner membrane. The enzyme catalyses UDP-N-acetyl-alpha-D-muramoyl-L-alanyl-gamma-D-glutamyl-meso-2,6-diaminopimeloyl-D-alanyl-D-alanine + di-trans,octa-cis-undecaprenyl phosphate = di-trans,octa-cis-undecaprenyl diphospho-N-acetyl-alpha-D-muramoyl-L-alanyl-D-glutamyl-meso-2,6-diaminopimeloyl-D-alanyl-D-alanine + UMP. Its pathway is cell wall biogenesis; peptidoglycan biosynthesis. Catalyzes the initial step of the lipid cycle reactions in the biosynthesis of the cell wall peptidoglycan: transfers peptidoglycan precursor phospho-MurNAc-pentapeptide from UDP-MurNAc-pentapeptide onto the lipid carrier undecaprenyl phosphate, yielding undecaprenyl-pyrophosphoryl-MurNAc-pentapeptide, known as lipid I. This is Phospho-N-acetylmuramoyl-pentapeptide-transferase from Bordetella petrii (strain ATCC BAA-461 / DSM 12804 / CCUG 43448).